The chain runs to 240 residues: Ribosomal RNA small subunit methyltransferase G (240 aa).

S-adenosyl-L-methionine is bound by residues Gly79, Ala130–Glu131, and Arg149.

It belongs to the methyltransferase superfamily. RNA methyltransferase RsmG family.

It is found in the cytoplasm. Functionally, specifically methylates the N7 position of a guanine in 16S rRNA. The protein is Ribosomal RNA small subunit methyltransferase G of Moorella thermoacetica (strain ATCC 39073 / JCM 9320).